The chain runs to 986 residues: MAAVAKRTVTDWQLKPALGLAPLDQGRARQELAEIAAAAREEGLARLAKFLAGKGAGQDFLAAVFDLSPFLRDTSRRRPRILDALFDQPVEARLEAITAAIEQAPLAETVSESSLMMELRQCKAEAHFLIALADLAGEAETSLTVRRLSDLADACTRAAVDFLLRDAHGQGKLKLPDLDNPSLQSGWILLGMGKLGAHELNFSSDIDLVVFFDPDAPAVVDRLDATELFSRLTRRLVRILQDRTEHGYVFRTDLRLRPDPGSTPLAIPVEAALRYYEARGQNWERAAMIKARPVAGDLAAGAAFLRELQPYIWRKYMDYAAIADVHSIKRQIHAHKGHGEIAVKGHNVKLGRGGIREIEFFVQTQQLIAGGRFPELRGRETVPMLGQLAARGWITADARDALARQYWFLRRVEHAVQMVADEQTHTLPEDDEGLERIAHMLGFGDAAAFSQAFRASLLQVERHYAALFETAPELSAGIGNLVFTGDVDDPNTLQTLQGLGFQRPSDICRVIRGWHFGRYRVTQSAEARERLTELTPALLKAFGQTRRADEALIRFDEFLAGLPAGIQLFSLLQSNPALLKLMATIMGAAPRLAAIITRRPHVFDGLLDPALLTELPDRVYLSARLSAFLEGDRAYEEVLDRLRIFASEQKFLIGVRLLAGSIDPARAGRAFSDLADLTIEAALQAVTAEFAARHGTIAGGVVSLLGMGKLGSRELTAGSDVDLILLYDHDADAEDSDGDKPLAPSHYYTRMTQRLISAVSAPTAEGVLYELDLRLRPSGNKGPVATHIDAFKKYQRQEAWTWEHMALSRARAIGGDTGLCAEVEAEVAAVLGQPRDAAKVKTEAADMRAMIEKEKPARDLWDIKLIPGGLIDLEFIAQVAVITGQVGAGPRATGTAEILSRLAPGFADAGARQELGAAFALYLALTQMTRLCLTGSFERDDVPPGLSDLLLAVTDLPDFGVLEAHLKETSQKVRKDFDLLLRAGRP.

Residues 1 to 470 form an adenylyl removase region; that stretch reads MAAVAKRTVT…ERHYAALFET (470 aa). An adenylyl transferase region spans residues 476 to 986; sequence AGIGNLVFTG…FDLLLRAGRP (511 aa).

The protein belongs to the GlnE family. Mg(2+) serves as cofactor.

It catalyses the reaction [glutamine synthetase]-O(4)-(5'-adenylyl)-L-tyrosine + phosphate = [glutamine synthetase]-L-tyrosine + ADP. It carries out the reaction [glutamine synthetase]-L-tyrosine + ATP = [glutamine synthetase]-O(4)-(5'-adenylyl)-L-tyrosine + diphosphate. Involved in the regulation of glutamine synthetase GlnA, a key enzyme in the process to assimilate ammonia. When cellular nitrogen levels are high, the C-terminal adenylyl transferase (AT) inactivates GlnA by covalent transfer of an adenylyl group from ATP to specific tyrosine residue of GlnA, thus reducing its activity. Conversely, when nitrogen levels are low, the N-terminal adenylyl removase (AR) activates GlnA by removing the adenylyl group by phosphorolysis, increasing its activity. The regulatory region of GlnE binds the signal transduction protein PII (GlnB) which indicates the nitrogen status of the cell. In Mesorhizobium japonicum (strain LMG 29417 / CECT 9101 / MAFF 303099) (Mesorhizobium loti (strain MAFF 303099)), this protein is Bifunctional glutamine synthetase adenylyltransferase/adenylyl-removing enzyme.